The chain runs to 417 residues: Vacuolar cation/proton exchanger 3 (417 aa).

Over 1 to 45 (MENPQIEMGAFKANGPQLQNGGLRSSMVQSWNLQRFVESALRSIR) the chain is Cytoplasmic. A helical transmembrane segment spans residues 46 to 66 (IVIFTSKLNLLLPFGPASIIL). At 67–73 (HYTTSRH) the chain is on the extracellular side. Residues 74–94 (GLVFLFSMLGITPLAERLGYA) traverse the membrane as a helical segment. The Cytoplasmic segment spans residues 95 to 105 (TEQLAIYTGPT). Residues 106-126 (VGGLLNATFGNATEMIIAIYA) form a helical membrane-spanning segment. The cation selection stretch occupies residues 115–150 (GNATEMIIAIYALKNGMIRVVQQSLLGSILSNMLLV). Topologically, residues 127–140 (LKNGMIRVVQQSLL) are extracellular. Residues 141-161 (GSILSNMLLVMGCAFFAGGIV) traverse the membrane as a helical segment. Topologically, residues 162–173 (HRNKDQVFSKAT) are cytoplasmic. Residues 174–194 (AVVNSGLLLMAVMGLMFPAVL) form a helical membrane-spanning segment. Residues 195-207 (HFTHSEVRQGASE) lie on the Extracellular side of the membrane. A helical membrane pass occupies residues 208–230 (VSLSRFSSCIMLVAYASYLYFQL). Topologically, residues 231-258 (SGRNNAYSPIGSEEMPNEDAAEEDEESE) are cytoplasmic. Residues 259-279 (IGMWESIAWLAMLTLWVSILS) traverse the membrane as a helical segment. Residues 280-291 (EYLVNAIEGASD) lie on the Extracellular side of the membrane. Residues 292-312 (SLNLPVAFISVILLPIVGNAA) traverse the membrane as a helical segment. The cation selection stretch occupies residues 309–344 (GNAAEHASAIMFAMKDKLDITLGVAIGSSTQISMFV). At 313 to 330 (EHASAIMFAMKDKLDITL) the chain is on the cytoplasmic side. Residues 331–351 (GVAIGSSTQISMFVIPFCVVI) form a helical membrane-spanning segment. Residues 352–360 (GWMMGQKMD) lie on the Extracellular side of the membrane. The chain crosses the membrane as a helical span at residues 361 to 381 (LNFQLFETATLFITVLVVAFM). Topologically, residues 382 to 389 (LQDGVANY) are cytoplasmic. A helical membrane pass occupies residues 390-410 (LKGLMLILCYLIVAASFFVHV). The Extracellular segment spans residues 411–417 (DPQSSDD).

It belongs to the Ca(2+):cation antiporter (CaCA) (TC 2.A.19) family. Cation/proton exchanger (CAX) subfamily. Ubiquitous.

Its subcellular location is the vacuole membrane. Functionally, vacuolar cation/proton exchanger (CAX). Translocates Ca(2+) and other metal ions into vacuoles using the proton gradient formed by H(+)-ATPase and H(+)-pyrophosphatase. This is Vacuolar cation/proton exchanger 3 (CAX3) from Oryza sativa subsp. japonica (Rice).